A 393-amino-acid polypeptide reads, in one-letter code: S-adenosylmethionine synthase (393 aa).

Glu9 provides a ligand contact to Mg(2+). ATP is bound at residue His15. Residue Glu43 coordinates K(+). Residues Glu56 and Gln99 each coordinate L-methionine. Residues 167–169, 235–238, Asp246, 252–253, Ala269, Lys273, and Lys277 contribute to the ATP site; these read DGK, SGRF, and RK. Position 246 (Asp246) interacts with L-methionine. Lys277 provides a ligand contact to L-methionine.

Belongs to the AdoMet synthase family. Homotetramer. The cofactor is Mn(2+). Requires Mg(2+) as cofactor. It depends on Co(2+) as a cofactor. K(+) serves as cofactor.

It localises to the cytoplasm. The catalysed reaction is L-methionine + ATP + H2O = S-adenosyl-L-methionine + phosphate + diphosphate. It participates in amino-acid biosynthesis; S-adenosyl-L-methionine biosynthesis; S-adenosyl-L-methionine from L-methionine: step 1/1. Functionally, catalyzes the formation of S-adenosylmethionine from methionine and ATP. The reaction comprises two steps that are both catalyzed by the same enzyme: formation of S-adenosylmethionine (AdoMet) and triphosphate, and subsequent hydrolysis of the triphosphate. The chain is S-adenosylmethionine synthase (SAMS) from Brassica rapa subsp. pekinensis (Chinese cabbage).